The primary structure comprises 345 residues: Biotin synthase (345 aa).

The Radical SAM core domain maps to Pro-66–Arg-291. Positions 81, 85, and 88 each coordinate [4Fe-4S] cluster. [2Fe-2S] cluster contacts are provided by Cys-124, Cys-157, Cys-216, and Arg-286.

It belongs to the radical SAM superfamily. Biotin synthase family. As to quaternary structure, homodimer. Requires [4Fe-4S] cluster as cofactor. [2Fe-2S] cluster serves as cofactor.

The enzyme catalyses (4R,5S)-dethiobiotin + (sulfur carrier)-SH + 2 reduced [2Fe-2S]-[ferredoxin] + 2 S-adenosyl-L-methionine = (sulfur carrier)-H + biotin + 2 5'-deoxyadenosine + 2 L-methionine + 2 oxidized [2Fe-2S]-[ferredoxin]. The protein operates within cofactor biosynthesis; biotin biosynthesis; biotin from 7,8-diaminononanoate: step 2/2. Its function is as follows. Catalyzes the conversion of dethiobiotin (DTB) to biotin by the insertion of a sulfur atom into dethiobiotin via a radical-based mechanism. The polypeptide is Biotin synthase (Mycobacterium leprae (strain Br4923)).